Here is a 158-residue protein sequence, read N- to C-terminus: Transcription elongation factor GreA (158 aa).

This sequence belongs to the GreA/GreB family.

Its function is as follows. Necessary for efficient RNA polymerase transcription elongation past template-encoded arresting sites. The arresting sites in DNA have the property of trapping a certain fraction of elongating RNA polymerases that pass through, resulting in locked ternary complexes. Cleavage of the nascent transcript by cleavage factors such as GreA or GreB allows the resumption of elongation from the new 3'terminus. GreA releases sequences of 2 to 3 nucleotides. In Sinorhizobium medicae (strain WSM419) (Ensifer medicae), this protein is Transcription elongation factor GreA.